Here is a 174-residue protein sequence, read N- to C-terminus: NADH-quinone oxidoreductase subunit B 1 (174 aa).

Cys53, Cys54, Cys118, and Cys148 together coordinate [4Fe-4S] cluster.

This sequence belongs to the complex I 20 kDa subunit family. In terms of assembly, NDH-1 is composed of 14 different subunits. Subunits NuoB, C, D, E, F, and G constitute the peripheral sector of the complex. Requires [4Fe-4S] cluster as cofactor.

It is found in the cell inner membrane. It catalyses the reaction a quinone + NADH + 5 H(+)(in) = a quinol + NAD(+) + 4 H(+)(out). Functionally, NDH-1 shuttles electrons from NADH, via FMN and iron-sulfur (Fe-S) centers, to quinones in the respiratory chain. The immediate electron acceptor for the enzyme in this species is believed to be ubiquinone. Couples the redox reaction to proton translocation (for every two electrons transferred, four hydrogen ions are translocated across the cytoplasmic membrane), and thus conserves the redox energy in a proton gradient. This is NADH-quinone oxidoreductase subunit B 1 from Cereibacter sphaeroides (strain KD131 / KCTC 12085) (Rhodobacter sphaeroides).